Consider the following 128-residue polypeptide: Large ribosomal subunit protein bL12 (128 aa).

This sequence belongs to the bacterial ribosomal protein bL12 family. In terms of assembly, homodimer. Part of the ribosomal stalk of the 50S ribosomal subunit. Forms a multimeric L10(L12)X complex, where L10 forms an elongated spine to which 2 to 4 L12 dimers bind in a sequential fashion. Binds GTP-bound translation factors.

Functionally, forms part of the ribosomal stalk which helps the ribosome interact with GTP-bound translation factors. Is thus essential for accurate translation. The protein is Large ribosomal subunit protein bL12 of Acidithiobacillus ferrooxidans (strain ATCC 23270 / DSM 14882 / CIP 104768 / NCIMB 8455) (Ferrobacillus ferrooxidans (strain ATCC 23270)).